The primary structure comprises 132 residues: Small ribosomal subunit protein uS8 (132 aa).

This sequence belongs to the universal ribosomal protein uS8 family. In terms of assembly, part of the 30S ribosomal subunit. Contacts proteins S5 and S12.

Its function is as follows. One of the primary rRNA binding proteins, it binds directly to 16S rRNA central domain where it helps coordinate assembly of the platform of the 30S subunit. The protein is Small ribosomal subunit protein uS8 of Bartonella bacilliformis (strain ATCC 35685 / KC583 / Herrer 020/F12,63).